Reading from the N-terminus, the 227-residue chain is DNA repair protein RecO (227 aa).

Belongs to the RecO family.

In terms of biological role, involved in DNA repair and RecF pathway recombination. This Pseudomonas putida (strain GB-1) protein is DNA repair protein RecO.